The chain runs to 774 residues: Ion-translocating oxidoreductase complex subunit C (774 aa).

2 4Fe-4S ferredoxin-type domains span residues 369-397 (GEPQ…QQLY) and 407-436 (KATT…VQYF). The [4Fe-4S] cluster site is built by cysteine 377, cysteine 380, cysteine 383, cysteine 387, cysteine 416, cysteine 419, cysteine 422, and cysteine 426. Residues 602–750 (KLEQQQANAE…EPEEQIDPRK (149 aa)) form a disordered region.

This sequence belongs to the 4Fe4S bacterial-type ferredoxin family. RnfC subfamily. In terms of assembly, the complex is composed of six subunits: RsxA, RsxB, RsxC, RsxD, RsxE and RsxG. The cofactor is [4Fe-4S] cluster.

Its subcellular location is the cell inner membrane. Functionally, part of a membrane-bound complex that couples electron transfer with translocation of ions across the membrane. Required to maintain the reduced state of SoxR. The sequence is that of Ion-translocating oxidoreductase complex subunit C from Escherichia coli O6:K15:H31 (strain 536 / UPEC).